The primary structure comprises 591 residues: Probable translation initiation factor IF-2 (591 aa).

The region spanning 6–220 (IRTPIVCVMG…IMIGLAQRYM (215 aa)) is the tr-type G domain. Positions 15-22 (GHVDHGKT) are G1. 15–22 (GHVDHGKT) is a binding site for GTP. The G2 stretch occupies residues 40 to 44 (AITQH). The tract at residues 76–79 (DTPG) is G3. GTP contacts are provided by residues 76 to 80 (DTPGH) and 130 to 133 (TKVD). The interval 130–133 (TKVD) is G4. Residues 198 to 200 (SAH) are G5.

It belongs to the TRAFAC class translation factor GTPase superfamily. Classic translation factor GTPase family. IF-2 subfamily.

Its function is as follows. Function in general translation initiation by promoting the binding of the formylmethionine-tRNA to ribosomes. Seems to function along with eIF-2. This chain is Probable translation initiation factor IF-2, found in Methanoregula boonei (strain DSM 21154 / JCM 14090 / 6A8).